A 503-amino-acid polypeptide reads, in one-letter code: MITSTRLPQNHPEELYAAVDLGSNSFHLVIVRVVAGSVQIIGKVKQKVRLAAGLDDNMMLDNESLERGWRCLETFAERLQDIPRDNIRVVATATLRLAKNADVFTVKAQQILDHTLSVISGEEEARQIYLGVAYTSANQGNSLVIDIGGASTEIIIGNDMTPIHLVSLNMGCVTFKERHFAGDVLSEENFAAAIDAAKAMVDAVADKFVCFDWQQCLGASGTPQAITEILVAQGISDAIRLDYLYNLRQQCIDCSTLDNLIIDGLDESRRIIFPSGLAILIALFESLSIRDMQISGGALREGLIYGMLENMQQNDRRMQTIHQHMQHFHIDSEQAERVTEVALTLFKQLSEQTDVDGIDGEAMLVAAAMLHETGLHIEYKLHHKHGAYILGHVPMVGYTNLQRDGIKTLVLNHRQQISPEVFDQNHSETRGIMRSLVRVLRLACILSIRRKDNLLPQFCLEVEENDWRLVFPEGWLKAHPLIDAELANEKWQQHKMGWHLTCE.

The protein belongs to the GppA/Ppx family. GppA subfamily.

It carries out the reaction guanosine 3'-diphosphate 5'-triphosphate + H2O = guanosine 3',5'-bis(diphosphate) + phosphate + H(+). It participates in purine metabolism; ppGpp biosynthesis; ppGpp from GTP: step 2/2. Its function is as follows. Catalyzes the conversion of pppGpp to ppGpp. Guanosine pentaphosphate (pppGpp) is a cytoplasmic signaling molecule which together with ppGpp controls the 'stringent response', an adaptive process that allows bacteria to respond to amino acid starvation, resulting in the coordinated regulation of numerous cellular activities. This Pseudoalteromonas atlantica (strain T6c / ATCC BAA-1087) protein is Guanosine-5'-triphosphate,3'-diphosphate pyrophosphatase.